We begin with the raw amino-acid sequence, 55 residues long: Lantibiotic epilancin 15X (55 aa).

Residues 1–24 (MKKELFDLNLNKDIEAQKSDLNPQ) constitute a propeptide, cleaved by ElxP. A D-lactate; by the dehydratase ElxB and the dehydrogenase ElxO modification is found at Ser25. The residue at position 27 (Ser27) is a 2,3-didehydroalanine (Ser); by the dehydratase ElxB. Residues Thr31 and Thr32 each carry the 2,3-didehydrobutyrine; by the dehydratase ElxB modification. The segment at residues 36–40 (SKKLC) is a cross-link (lanthionine (Ser-Cys); by the dehydratase ElxB and the cyclase ElxC). Cross-links (beta-methyllanthionine (Thr-Cys); by the dehydratase ElxB and the cyclase ElxC) lie at residues 44 to 47 (TLTC) and 46 to 49 (TCGC). Thr52 is modified (2,3-didehydrobutyrine; by the dehydratase ElxB).

In terms of processing, maturation of this lantibiotic involves the enzymatic conversion of Thr, and Ser into dehydrated AA by ElxB and the formation of thioether bonds with cysteine by the cyclase ElxC. The next steps are cleavage of the leader peptide by ElxP and membrane translocation by ElxT. The leader peptide may be removed before membrane translocation, in contrast to other lantibiotics for which the cleavage occur after translocation. This is suggested by the probable cytoplasmic localization of the serine protease ElxP that cleaves the leader peptide. Post-translationally, the N-terminal D-lactate is probably produced by dehydration of Ser-25 by ElxB, followed by proteolytic removal of the leader peptide by the serine protease ElxP and hydrolysis of the resulting new N-terminal dehydroalanine. This hydrolysis may occur spontaneously. The pyruvate group thus formed is reduced to D-lactate by the NADPH-dependent oxidoreductase ElxO. This N-terminal D-lactate protects the lantibiotic against degradation against aminopeptidase. It is not established whether the 2,3-didehydrobutyrines are the E- or Z-isomers.

In terms of biological role, lanthionine-containing peptide antibiotic (lantibiotic) active on Gram-positive bacteria such as staphylococci, enterococci and streptococci. The bactericidal activity of lantibiotics is based on depolarization of energized bacterial cytoplasmic membranes, initiated by the formation of aqueous transmembrane pores. This Staphylococcus epidermidis protein is Lantibiotic epilancin 15X.